The primary structure comprises 640 residues: Choline O-acetyltransferase (640 aa).

A compositionally biased stretch (basic and acidic residues) spans 1–22; it reads MPDLEKDMQKKEKDSRSKDEPA. Positions 1 to 28 are disordered; sequence MPDLEKDMQKKEKDSRSKDEPAVPKLPV. H334 functions as the Proton acceptor in the catalytic mechanism. CoA-binding positions include 412–424, S450, and Q551; that span reads GKEF…TSPD.

Belongs to the carnitine/choline acetyltransferase family. In terms of tissue distribution, detected in brain and in embryonic retina.

The catalysed reaction is choline + acetyl-CoA = acetylcholine + CoA. Functionally, catalyzes the reversible synthesis of acetylcholine (ACh) from acetyl CoA and choline at cholinergic synapses. The chain is Choline O-acetyltransferase (CHAT) from Gallus gallus (Chicken).